We begin with the raw amino-acid sequence, 189 residues long: dCTP deaminase (189 aa).

DCTP contacts are provided by residues 112–117, 136–138, Gln157, Tyr171, and Gln181; these read KSTYAR and TLE. Glu138 (proton donor/acceptor) is an active-site residue.

It belongs to the dCTP deaminase family. As to quaternary structure, homotrimer.

The enzyme catalyses dCTP + H2O + H(+) = dUTP + NH4(+). The protein operates within pyrimidine metabolism; dUMP biosynthesis; dUMP from dCTP (dUTP route): step 1/2. In terms of biological role, catalyzes the deamination of dCTP to dUTP. The sequence is that of dCTP deaminase from Leptothrix cholodnii (strain ATCC 51168 / LMG 8142 / SP-6) (Leptothrix discophora (strain SP-6)).